The sequence spans 112 residues: Large ribosomal subunit protein uL22 (112 aa).

Belongs to the universal ribosomal protein uL22 family. As to quaternary structure, part of the 50S ribosomal subunit.

Functionally, this protein binds specifically to 23S rRNA; its binding is stimulated by other ribosomal proteins, e.g. L4, L17, and L20. It is important during the early stages of 50S assembly. It makes multiple contacts with different domains of the 23S rRNA in the assembled 50S subunit and ribosome. In terms of biological role, the globular domain of the protein is located near the polypeptide exit tunnel on the outside of the subunit, while an extended beta-hairpin is found that lines the wall of the exit tunnel in the center of the 70S ribosome. The protein is Large ribosomal subunit protein uL22 of Caldanaerobacter subterraneus subsp. tengcongensis (strain DSM 15242 / JCM 11007 / NBRC 100824 / MB4) (Thermoanaerobacter tengcongensis).